The sequence spans 1179 residues: Integrin alpha-E (1179 aa).

An N-terminal signal peptide occupies residues 1 to 18 (MWLFHTLLCIASLALLAA). Topologically, residues 19–1124 (FNVDVARPWL…VFLKDEKYHS (1106 aa)) are extracellular. FG-GAP repeat units lie at residues 22–79 (DVAR…EILC) and 80–138 (HPVE…PQAQ). N-linked (GlcNAc...) asparagine glycosylation is present at Asn-49. Cystine bridges form between Cys-70–Cys-79 and Cys-126–Cys-159. The segment at 145-199 (ENLLDPDARVDTGDCYSNKEGGGEDDVNTARQRRALEKEEEEDKEEEEDEEEEEA) is X-domain (extra domain). A disordered region spans residues 158 to 200 (DCYSNKEGGGEDDVNTARQRRALEKEEEEDKEEEEDEEEEEAG). Over residues 182–200 (KEEEEDKEEEEDEEEEEAG) the composition is skewed to acidic residues. In terms of domain architecture, VWFA spans 200 to 389 (GTEIAIILDG…SKLRYNIISM (190 aa)). 2 N-linked (GlcNAc...) asparagine glycosylation sites follow: Asn-271 and Asn-321. The stretch at 390-442 (EGTVGDALHYQLAQIGFSAQILDERQVLLGAVGAFDWSGGALLYDTRSRRGRF) is one FG-GAP 3 repeat. N-linked (GlcNAc...) asparagine glycosylation is present at Asn-444. FG-GAP repeat units lie at residues 447–499 (AAAA…GREA), 500–560 (SFLP…DGSF), 563–627 (ARIL…GLSA), and 631–691 (QRIR…FTPS). Asp-522, Asp-524, Asp-526, Asp-530, Asp-586, Ser-588, Asp-590, Asp-594, Asp-654, Ser-656, Asp-658, and Asp-662 together coordinate Ca(2+). Cysteines 706 and 762 form a disulfide. Residues Asn-726 and Asn-782 are each glycosylated (N-linked (GlcNAc...) asparagine). Cys-823 and Cys-829 form a disulfide bridge. Asn-857 is a glycosylation site (N-linked (GlcNAc...) asparagine). An intrachain disulfide couples Cys-893 to Cys-907. 2 N-linked (GlcNAc...) asparagine glycosylation sites follow: Asn-934 and Asn-954. Cystine bridges form between Cys-1008–Cys-1033 and Cys-1041–Cys-1057. Residues Asn-1065 and Asn-1096 are each glycosylated (N-linked (GlcNAc...) asparagine). Residues 1125 to 1147 (LPIIIKGSVGGLLVLIVILVILF) form a helical membrane-spanning segment. At 1148-1179 (KCGFFKRKYQQLNLESIRKAQLKSENLLEEEN) the chain is on the cytoplasmic side. The short motif at 1150–1154 (GFFKR) is the GFFKR motif element.

The protein belongs to the integrin alpha chain family. Heterodimer of an alpha and a beta subunit. The alpha subunit is composed of a heavy and a light chains linked by a disulfide bond. Alpha-E associates with beta-7. In terms of tissue distribution, expressed on a subclass of T-lymphocytes known as intra-epithelial lymphocytes which are located between mucosal epithelial cells.

The protein resides in the membrane. Its function is as follows. Integrin alpha-E/beta-7 is a receptor for E-cadherin. It mediates adhesion of intra-epithelial T-lymphocytes to epithelial cell monolayers. The protein is Integrin alpha-E (ITGAE) of Homo sapiens (Human).